A 364-amino-acid polypeptide reads, in one-letter code: Aminomethyltransferase (364 aa).

The protein belongs to the GcvT family. As to quaternary structure, the glycine cleavage system is composed of four proteins: P, T, L and H.

It catalyses the reaction N(6)-[(R)-S(8)-aminomethyldihydrolipoyl]-L-lysyl-[protein] + (6S)-5,6,7,8-tetrahydrofolate = N(6)-[(R)-dihydrolipoyl]-L-lysyl-[protein] + (6R)-5,10-methylene-5,6,7,8-tetrahydrofolate + NH4(+). In terms of biological role, the glycine cleavage system catalyzes the degradation of glycine. This is Aminomethyltransferase from Salmonella dublin (strain CT_02021853).